The primary structure comprises 301 residues: tRNA-cytidine(32) 2-sulfurtransferase (301 aa).

The PP-loop motif motif lies at 55 to 60 (SGGKDS). [4Fe-4S] cluster contacts are provided by Cys130, Cys133, and Cys221.

The protein belongs to the TtcA family. In terms of assembly, homodimer. Mg(2+) serves as cofactor. [4Fe-4S] cluster is required as a cofactor.

It localises to the cytoplasm. It carries out the reaction cytidine(32) in tRNA + S-sulfanyl-L-cysteinyl-[cysteine desulfurase] + AH2 + ATP = 2-thiocytidine(32) in tRNA + L-cysteinyl-[cysteine desulfurase] + A + AMP + diphosphate + H(+). The protein operates within tRNA modification. Functionally, catalyzes the ATP-dependent 2-thiolation of cytidine in position 32 of tRNA, to form 2-thiocytidine (s(2)C32). The sulfur atoms are provided by the cysteine/cysteine desulfurase (IscS) system. This is tRNA-cytidine(32) 2-sulfurtransferase from Acinetobacter baumannii (strain SDF).